The primary structure comprises 569 residues: Glutamate--tRNA ligase (569 aa).

The 'HIGH' region motif lies at 107–117 (PEPNGYPHIGH).

It belongs to the class-I aminoacyl-tRNA synthetase family. Glutamate--tRNA ligase type 2 subfamily.

Its subcellular location is the cytoplasm. It catalyses the reaction tRNA(Glu) + L-glutamate + ATP = L-glutamyl-tRNA(Glu) + AMP + diphosphate. Its function is as follows. Catalyzes the attachment of glutamate to tRNA(Glu) in a two-step reaction: glutamate is first activated by ATP to form Glu-AMP and then transferred to the acceptor end of tRNA(Glu). This chain is Glutamate--tRNA ligase, found in Nitrosopumilus maritimus (strain SCM1).